Consider the following 90-residue polypeptide: Acylphosphatase (90 aa).

Positions 5–90 (CERFIVKGHV…YKPFRGFKIL (86 aa)) constitute an Acylphosphatase-like domain. Residues R20 and N38 contribute to the active site.

It belongs to the acylphosphatase family.

It catalyses the reaction an acyl phosphate + H2O = a carboxylate + phosphate + H(+). The chain is Acylphosphatase (acyP) from Vibrio parahaemolyticus serotype O3:K6 (strain RIMD 2210633).